We begin with the raw amino-acid sequence, 202 residues long: HTH-type transcriptional regulator BetI (202 aa).

Residues 8 to 68 (PIRRRQLIDA…ATMRDITRQL (61 aa)) form the HTH tetR-type domain. Residues 31 to 50 (TIAQIARRAGVSAGIISHYF) constitute a DNA-binding region (H-T-H motif).

It functions in the pathway amine and polyamine biosynthesis; betaine biosynthesis via choline pathway [regulation]. Its function is as follows. Repressor involved in the biosynthesis of the osmoprotectant glycine betaine. It represses transcription of the choline transporter BetT and the genes of BetAB involved in the synthesis of glycine betaine. This is HTH-type transcriptional regulator BetI from Cronobacter sakazakii (strain ATCC BAA-894) (Enterobacter sakazakii).